The following is a 354-amino-acid chain: MALLKVKFNQKKRVKLAQGLWLMNWFSVFAGIIVFSMGLFLKIELRKRSEVMDNSESHFVPNSLILMGILSCAFNGFAGKICYDSLDPAKFAKWKPLLKPYLALCFFFNILLFFVALICFLMRGSLESTLAQGLKNSMKFYRDTDTPGRCFMKKTIDMLQIEFKCCGNNGFKDWFEIQWISNRYLDFSSKEVKDRIKSNVDGRYLVDGVPFSCCNPSSPRPCIQYQVTNNSAHYSYDYQTEELNLWGRGCREALLHYYSSMMSSMGAVVLLVWLFEMSVMVGLRLLHTSLESIANPEDPECESEGWILENSLKDTLKSALESLKKIGKFNQVEAGAEGAEGEEAGKTPAITTVS.

The Cytoplasmic segment spans residues 1 to 24 (MALLKVKFNQKKRVKLAQGLWLMN). A helical membrane pass occupies residues 25–43 (WFSVFAGIIVFSMGLFLKI). Over 44–61 (ELRKRSEVMDNSESHFVP) the chain is Lumenal. A helical membrane pass occupies residues 62–80 (NSLILMGILSCAFNGFAGK). The Cytoplasmic segment spans residues 81–99 (ICYDSLDPAKFAKWKPLLK). A helical membrane pass occupies residues 100–123 (PYLALCFFFNILLFFVALICFLMR). At 124–264 (GSLESTLAQG…LHYYSSMMSS (141 aa)) the chain is on the lumenal side. Asparagine 229 is a glycosylation site (N-linked (GlcNAc...) asparagine). Residues 265–290 (MGAVVLLVWLFEMSVMVGLRLLHTSL) traverse the membrane as a helical segment. The Cytoplasmic segment spans residues 291–354 (ESIANPEDPE…GKTPAITTVS (64 aa)). The segment at 335–354 (GAEGAEGEEAGKTPAITTVS) is disordered.

Belongs to the PRPH2/ROM1 family. Homodimer; disulfide-linked.

The protein localises to the membrane. Functionally, may be involved in the morphogenesis of retina outer segment disks and the development and maintenance of the retina ultrastructure. This is Peripherin-2 (PRPH2) from Gallus gallus (Chicken).